The sequence spans 338 residues: Putative clathrin assembly protein At5g10410 (338 aa).

Residues 27–157 form the ENTH domain; sequence FGSTAVKYIH…WVPKVLGSFP (131 aa).

The protein localises to the membrane. It is found in the clathrin-coated pit. The protein resides in the golgi apparatus. It localises to the cytoplasmic vesicle. Its subcellular location is the clathrin-coated vesicle. This Arabidopsis thaliana (Mouse-ear cress) protein is Putative clathrin assembly protein At5g10410.